The primary structure comprises 306 residues: Dermonecrotic toxin LiSicTox-alphaIA1bi (306 aa).

An N-terminal signal peptide occupies residues 1 to 18 (MLPYIVLVLGCWSVLSQA). A propeptide spanning residues 19–26 (AQTDDEER) is cleaved from the precursor. Histidine 38 is an active-site residue. Mg(2+)-binding residues include glutamate 58 and aspartate 60. The active-site Nucleophile is histidine 74. Intrachain disulfides connect cysteine 78-cysteine 84 and cysteine 80-cysteine 223. Aspartate 118 is a Mg(2+) binding site.

The protein belongs to the arthropod phospholipase D family. Class II subfamily. Class IIa sub-subfamily. Mg(2+) serves as cofactor. As to expression, expressed by the venom gland.

Its subcellular location is the secreted. It carries out the reaction an N-(acyl)-sphingosylphosphocholine = an N-(acyl)-sphingosyl-1,3-cyclic phosphate + choline. The enzyme catalyses an N-(acyl)-sphingosylphosphoethanolamine = an N-(acyl)-sphingosyl-1,3-cyclic phosphate + ethanolamine. It catalyses the reaction a 1-acyl-sn-glycero-3-phosphocholine = a 1-acyl-sn-glycero-2,3-cyclic phosphate + choline. The catalysed reaction is a 1-acyl-sn-glycero-3-phosphoethanolamine = a 1-acyl-sn-glycero-2,3-cyclic phosphate + ethanolamine. Functionally, dermonecrotic toxins cleave the phosphodiester linkage between the phosphate and headgroup of certain phospholipids (sphingolipid and lysolipid substrates), forming an alcohol (often choline) and a cyclic phosphate. This toxin acts on sphingomyelin (SM). The level of enzymatic activity is high according to Tambourgi and colleagues or low according to Felicori and colleagues. It may also act on ceramide phosphoethanolamine (CPE), lysophosphatidylcholine (LPC) and lysophosphatidylethanolamine (LPE), but not on lysophosphatidylserine (LPS), and lysophosphatidylglycerol (LPG). It acts by transphosphatidylation, releasing exclusively cyclic phosphate products as second products. It induces complement-dependent hemolysis, dermonecrosis, vascular permeability and platelet aggregation. Both C5a and the membrane attack complex may play a role in the induction of dermonecrosis. MMP-9 and MMP-2 produced by skin fibroblasts can also contribute to proteolytic tissue destruction. The protein is Dermonecrotic toxin LiSicTox-alphaIA1bi of Loxosceles intermedia (Brown spider).